Consider the following 154-residue polypeptide: Lymphocyte antigen 6K (154 aa).

The first 20 residues, 1–20, serve as a signal peptide directing secretion; sequence MAFLVALLVVLGLQLVQSNA. Positions 21–117 constitute a UPAR/Ly6 domain; sequence LTCHVCEAQN…NGEGPPTDQL (97 aa). The GPI-anchor amidated glycine moiety is linked to residue glycine 123. The propeptide at 124–154 is removed in mature form; that stretch reads KASGRRHRYIELLLTGFMVLTANGLSALCLL.

In terms of assembly, interacts with ADAM3 and TEX101. As to expression, strongly expressed in testes and weakly expressed in the epididymis, ovary, and uterus. Expressed in testicular germ cells (TGCs). Expressed in the testicular seminiferous tubules, in spermatocytes, spermatids, and testicular spermatozoa.

Its subcellular location is the secreted. The protein resides in the cytoplasm. It localises to the cell membrane. The protein localises to the cytoplasmic vesicle. It is found in the secretory vesicle. Its subcellular location is the acrosome. The protein resides in the membrane raft. Required for sperm migration into the oviduct and male fertility by controlling binding of sperm to zona pellucida. May play a role in cell growth. This is Lymphocyte antigen 6K from Mus musculus (Mouse).